Reading from the N-terminus, the 308-residue chain is Maspardin (308 aa).

The region spanning 87–159 (FCDGFRKLLD…NSFWLMPAFM (73 aa)) is the AB hydrolase-1 domain. Ser-304 carries the phosphoserine modification.

This sequence belongs to the AB hydrolase superfamily. As to quaternary structure, interacts with CD4. Interacts with ALDH16A1.

Its subcellular location is the cytoplasm. May play a role as a negative regulatory factor in CD4-dependent T-cell activation. This chain is Maspardin (SPG21), found in Pongo abelii (Sumatran orangutan).